A 767-amino-acid polypeptide reads, in one-letter code: 5-methyltetrahydropteroyltriglutamate--homocysteine methyltransferase (767 aa).

Residues 16-19 (RELK) and Lys-122 contribute to the 5-methyltetrahydropteroyltri-L-glutamate site. L-homocysteine-binding positions include 443 to 445 (IGS) and Glu-496. L-methionine is bound by residues 443–445 (IGS) and Glu-496. 5-methyltetrahydropteroyltri-L-glutamate-binding positions include 527–528 (RC) and Trp-573. Asp-611 contacts L-homocysteine. Asp-611 contacts L-methionine. Residue Glu-617 participates in 5-methyltetrahydropteroyltri-L-glutamate binding. Zn(2+)-binding residues include His-653, Cys-655, and Glu-677. The active-site Proton donor is the His-706. Residue Cys-738 participates in Zn(2+) binding.

It belongs to the vitamin-B12 independent methionine synthase family. Requires Zn(2+) as cofactor.

The enzyme catalyses 5-methyltetrahydropteroyltri-L-glutamate + L-homocysteine = tetrahydropteroyltri-L-glutamate + L-methionine. It functions in the pathway amino-acid biosynthesis; L-methionine biosynthesis via de novo pathway; L-methionine from L-homocysteine (MetE route): step 1/1. Its function is as follows. Catalyzes the transfer of a methyl group from 5-methyltetrahydrofolate to homocysteine resulting in methionine formation. This chain is 5-methyltetrahydropteroyltriglutamate--homocysteine methyltransferase, found in Ectopseudomonas mendocina (strain ymp) (Pseudomonas mendocina).